A 125-amino-acid polypeptide reads, in one-letter code: Small ribosomal subunit protein bS6 (125 aa).

The disordered stretch occupies residues 96–125 (VTAPSPMMREEKAKSAPQPAEEAKETTLAT). The segment covering 116–125 (EEAKETTLAT) has biased composition (basic and acidic residues).

Belongs to the bacterial ribosomal protein bS6 family.

Functionally, binds together with bS18 to 16S ribosomal RNA. In Nitrosospira multiformis (strain ATCC 25196 / NCIMB 11849 / C 71), this protein is Small ribosomal subunit protein bS6.